A 285-amino-acid polypeptide reads, in one-letter code: Pantothenate synthetase (285 aa).

30 to 37 (MGFLHEGH) contributes to the ATP binding site. Catalysis depends on histidine 37, which acts as the Proton donor. Residue glutamine 61 participates in (R)-pantoate binding. Glutamine 61 serves as a coordination point for beta-alanine. Residue 147 to 150 (GQKD) coordinates ATP. Glutamine 153 lines the (R)-pantoate pocket. ATP contacts are provided by residues valine 176 and 184–187 (KSSR).

The protein belongs to the pantothenate synthetase family. As to quaternary structure, homodimer.

It is found in the cytoplasm. It carries out the reaction (R)-pantoate + beta-alanine + ATP = (R)-pantothenate + AMP + diphosphate + H(+). The protein operates within cofactor biosynthesis; (R)-pantothenate biosynthesis; (R)-pantothenate from (R)-pantoate and beta-alanine: step 1/1. Catalyzes the condensation of pantoate with beta-alanine in an ATP-dependent reaction via a pantoyl-adenylate intermediate. The chain is Pantothenate synthetase from Listeria monocytogenes serovar 1/2a (strain ATCC BAA-679 / EGD-e).